The primary structure comprises 777 residues: Translation initiation factor IF-2 (777 aa).

Disordered regions lie at residues serine 30–asparagine 54 and glutamate 98–glutamate 117. A compositionally biased stretch (basic and acidic residues) spans glutamate 98–serine 109. Residues proline 279–glutamate 449 enclose the tr-type G domain. A G1 region spans residues glycine 288 to threonine 295. Glycine 288–threonine 295 is a GTP binding site. Residues glycine 313–histidine 317 are G2. Positions aspartate 334–glycine 337 are G3. GTP is bound by residues aspartate 334 to histidine 338 and asparagine 388 to aspartate 391. The segment at asparagine 388–aspartate 391 is G4. The interval serine 425–lysine 427 is G5.

It belongs to the TRAFAC class translation factor GTPase superfamily. Classic translation factor GTPase family. IF-2 subfamily.

The protein resides in the cytoplasm. One of the essential components for the initiation of protein synthesis. Protects formylmethionyl-tRNA from spontaneous hydrolysis and promotes its binding to the 30S ribosomal subunits. Also involved in the hydrolysis of GTP during the formation of the 70S ribosomal complex. The protein is Translation initiation factor IF-2 of Wolbachia sp. subsp. Brugia malayi (strain TRS).